The sequence spans 1282 residues: Protein crumbs homolog 2 (1282 aa).

The N-terminal stretch at 1–35 (MALVGPRIWGPRRDIYPLLLLLLLLLLLLLPWVPA) is a signal peptide. Residues 36-1221 (GLVPPETPSV…PLPLPFPLLE (1186 aa)) are Extracellular-facing. Residues 71-110 (ELGGCATQPCHHGALCVPQGPDPNSFRCYCVPGFQGPHCE) enclose the EGF-like 1 domain. 27 disulfide bridges follow: cysteine 75–cysteine 86, cysteine 80–cysteine 98, cysteine 100–cysteine 109, cysteine 116–cysteine 127, cysteine 121–cysteine 136, cysteine 138–cysteine 147, cysteine 154–cysteine 165, cysteine 159–cysteine 174, cysteine 176–cysteine 185, cysteine 192–cysteine 203, cysteine 197–cysteine 212, cysteine 214–cysteine 224, cysteine 231–cysteine 242, cysteine 236–cysteine 251, cysteine 253–cysteine 262, cysteine 269–cysteine 280, cysteine 274–cysteine 310, cysteine 312–cysteine 321, cysteine 328–cysteine 339, cysteine 333–cysteine 348, cysteine 350–cysteine 359, cysteine 366–cysteine 377, cysteine 371–cysteine 386, cysteine 388–cysteine 397, cysteine 404–cysteine 415, cysteine 409–cysteine 428, and cysteine 430–cysteine 439. Positions 112–148 (DIDECASRPCQHGGTCQNLADHYECHCPLGYAGVTCE) constitute an EGF-like 2; calcium-binding domain. The 37-residue stretch at 150-186 (EVDECSSAPCLHGGSCLDGVGSYRCVCAPGYAGANCQ) folds into the EGF-like 3; calcium-binding domain. Residues 188 to 225 (DVDECQSQPCAHGGVCHDLVNGFRCDCADTGYEGARCE) form the EGF-like 4; calcium-binding domain. 2 EGF-like domains span residues 227–263 (EVLE…ERCE) and 265–322 (DEDE…NDCS). N-linked (GlcNAc...) asparagine glycosylation occurs at asparagine 239. Serine 271 is a glycosylation site (O-linked (Glc...) serine). The 37-residue stretch at 324–360 (DVDECASGPCLNGGSCQDLPNGFQCYCQDGYTGLTCQ) folds into the EGF-like 7; calcium-binding domain. The EGF-like 8; calcium-binding domain maps to 362–398 (DMDECQSEPCLHGGTCSDTVAGYICQCPEAWGGHDCS). One can recognise an EGF-like 9 domain in the interval 400-440 (QLTGCQGHTCPLAATCIPTFKSGLHGYFCRCPPGTYGPFCG). Asparagine 442 carries N-linked (GlcNAc...) asparagine glycosylation. The Laminin G-like 1 domain maps to 444-607 (TFSVVSGSSV…ELKGTVLLGC (164 aa)). Disulfide bonds link cysteine 583–cysteine 607, cysteine 613–cysteine 624, cysteine 618–cysteine 633, and cysteine 635–cysteine 644. The region spanning 609–645 (RREPCQPLPCAHGGACVDLWTHFRCDCPRPYRGATCT) is the EGF-like 10 domain. The Laminin G-like 2 domain maps to 649 to 808 (PAATFGLGGA…GQSSNLTQGC (160 aa)). Asparagine 672, asparagine 693, asparagine 789, and asparagine 803 each carry an N-linked (GlcNAc...) asparagine glycan. 4 disulfide bridges follow: cysteine 769–cysteine 808, cysteine 814–cysteine 825, cysteine 819–cysteine 834, and cysteine 836–cysteine 845. The 37-residue stretch at 810–846 (SEDTCNPNPCFNGGTCHVTWNDFYCTCSENFTGPTCA) folds into the EGF-like 11 domain. Asparagine 839, asparagine 889, asparagine 929, and asparagine 1006 each carry an N-linked (GlcNAc...) asparagine glycan. Positions 872–1051 (VAEATFREGP…PGSPAVSLGC (180 aa)) constitute a Laminin G-like 3 domain. 13 disulfides stabilise this stretch: cysteine 1010/cysteine 1051, cysteine 1057/cysteine 1068, cysteine 1062/cysteine 1077, cysteine 1079/cysteine 1088, cysteine 1095/cysteine 1105, cysteine 1100/cysteine 1115, cysteine 1117/cysteine 1126, cysteine 1135/cysteine 1147, cysteine 1141/cysteine 1156, cysteine 1158/cysteine 1167, cysteine 1174/cysteine 1185, cysteine 1179/cysteine 1194, and cysteine 1196/cysteine 1205. EGF-like domains lie at 1053–1089 (GGPV…PRCE), 1091–1127 (RADP…PRCR), 1131–1168 (LPQG…LRCQ), and 1170–1206 (LDKP…QFCE). Asparagine 1138 and asparagine 1155 each carry an N-linked (GlcNAc...) asparagine glycan. The helical transmembrane segment at 1222–1242 (VAVPAACACLLLLLLGLLSGI) threads the bilayer. Topologically, residues 1243-1282 (LAARKRRQSEGTYSPSQQEVAGARLEMDSVLKVPPEERLI) are cytoplasmic. The interval 1246–1282 (RKRRQSEGTYSPSQQEVAGARLEMDSVLKVPPEERLI) is interaction with EPB41L5.

It belongs to the Crumbs protein family. As to quaternary structure, interacts (via intracellular domain) with EPB41L5. O-glucosylated by POGLUT1 at Ser-271; consists of an O-glucose trisaccharide, in which the O-glucose is elongated by the addition of two xylose residues. O-glucosylation is required for localization at the plasma membrane. In terms of tissue distribution, in the adult eye, strongly expressed in the outer nuclear layer, containing the cell bodies of the photoreceptor cells, and in the inner nuclear layer, containing the cell bodies of the horizontal, bipolar, amacrine, and Mueller glial cells. Also expressed in some cells in the ganglion cell layer (or may be displaced amacrine cells rather than ganglion cells).

The protein localises to the apical cell membrane. Functionally, apical polarity protein that plays a central role during the epithelial-to-mesenchymal transition (EMT) at gastrulation, when newly specified mesodermal cells move inside the embryo. Acts by promoting cell ingression, the process by which cells leave the epithelial epiblast and move inside the embryo to form a new tissue layer. The anisotropic distribution of CRB2 and MYH10/myosin-IIB at cell edges define which cells will ingress: cells with high apical CRB2 are probably extruded from the epiblast by neighboring cells with high levels of apical MYH10/myosin-IIB. Also required for maintenance of the apical polarity complex during development of the cortex. The polypeptide is Protein crumbs homolog 2 (Mus musculus (Mouse)).